The primary structure comprises 241 residues: MAANIIATKAATKMASKKEHQYCLLDSQEKRHGQHPFSFELKPYGQTGGNIIGVQGSLTHVIKMIVFPFMIPFPLQKTHIDDFIGGRVYLFFKELDMQAVSDVNGMQYHFEFKVVPVSSNQVELLPVNNKYKFTYAIPEVQYLTPIFYDLSGPLDFPLDTLSVHVDSLTNHIHLPIQNHNLTKGDRVFISGYKHPQTIESYKNNTIFIKCIPPLLSEKINLYIPKNRIRIPLYFKSLKTSK.

This sequence belongs to the asfivirus H240R family.

The protein resides in the virion. Functionally, forms the penton at the fivefold vertices of the icosahedral capsid. Together with the minor capsid proteins (p17, p49, and M1249L), forms a complicated network immediately below the outer capsid shell, stabilizing the whole capsid. The protein is Penton protein H240R of African swine fever virus (isolate Tick/Malawi/Lil 20-1/1983) (ASFV).